Reading from the N-terminus, the 461-residue chain is tRNA modification GTPase MnmE (461 aa).

Residues K32, E89, and K128 each coordinate (6S)-5-formyl-5,6,7,8-tetrahydrofolate. The 164-residue stretch at 224 to 387 folds into the TrmE-type G domain; the sequence is GHALSIVGKP…LSQKISAFFP (164 aa). N234 lines the K(+) pocket. GTP contacts are provided by residues 234 to 239, 253 to 259, and 278 to 281; these read NAGKSS, SDIKGTT, and DTAG. S238 lines the Mg(2+) pocket. Residues S253, I255, and T258 each contribute to the K(+) site. T259 lines the Mg(2+) pocket. Residue K461 coordinates (6S)-5-formyl-5,6,7,8-tetrahydrofolate.

It belongs to the TRAFAC class TrmE-Era-EngA-EngB-Septin-like GTPase superfamily. TrmE GTPase family. As to quaternary structure, homodimer. Heterotetramer of two MnmE and two MnmG subunits. K(+) serves as cofactor.

It localises to the cytoplasm. Its function is as follows. Exhibits a very high intrinsic GTPase hydrolysis rate. Involved in the addition of a carboxymethylaminomethyl (cmnm) group at the wobble position (U34) of certain tRNAs, forming tRNA-cmnm(5)s(2)U34. This is tRNA modification GTPase MnmE from Helicobacter pylori (strain ATCC 700392 / 26695) (Campylobacter pylori).